The primary structure comprises 584 residues: Outer membrane transporter CdiB-2 (584 aa).

A signal peptide spans 1 to 20 (MATRFAILPVTALITLTAQA). The segment covering 24-44 (PTPNDQAAAARANAEQNQQAQ) has biased composition (low complexity). Residues 24–72 (PTPNDQAAAARANAEQNQQAQQRRDAQQRDATVQAPGVRSDVPRPEAYP) form a disordered region. Positions 98–171 (SKAQGASALP…GALKLALIPG (74 aa)) constitute a POTRA domain.

The protein belongs to the TPS (TC 1.B.20) family.

The protein localises to the cell outer membrane. In terms of biological role, potential outer membrane protein component of a toxin-immunity protein module, which functions as a cellular contact-dependent growth inhibition (CDI) system. CDI modules allow bacteria to communicate with and inhibit the growth of closely related neighboring bacteria in a contact-dependent fashion. This protein may be required for secretion and assembly of the CdiA toxin protein. Functionally, expression of this cdiAIB locus in B.thailandensis confers protection against other bacteria carrying the locus; growth inhibition requires cellular contact. Probable member of a two partner secretion pathway (TPS) in which it mediates the secretion of CdiA2. This is Outer membrane transporter CdiB-2 (cdiB2) from Burkholderia pseudomallei (strain 1026b).